Reading from the N-terminus, the 304-residue chain is Aspartate carbamoyltransferase catalytic subunit (304 aa).

Arg-49 and Thr-50 together coordinate carbamoyl phosphate. An L-aspartate-binding site is contributed by Lys-77. Carbamoyl phosphate-binding residues include Arg-99, His-127, and Gln-130. Positions 160 and 211 each coordinate L-aspartate. Carbamoyl phosphate-binding residues include Ala-252 and Pro-253.

It belongs to the aspartate/ornithine carbamoyltransferase superfamily. ATCase family. As to quaternary structure, heterododecamer (2C3:3R2) of six catalytic PyrB chains organized as two trimers (C3), and six regulatory PyrI chains organized as three dimers (R2).

The catalysed reaction is carbamoyl phosphate + L-aspartate = N-carbamoyl-L-aspartate + phosphate + H(+). Its pathway is pyrimidine metabolism; UMP biosynthesis via de novo pathway; (S)-dihydroorotate from bicarbonate: step 2/3. Functionally, catalyzes the condensation of carbamoyl phosphate and aspartate to form carbamoyl aspartate and inorganic phosphate, the committed step in the de novo pyrimidine nucleotide biosynthesis pathway. The chain is Aspartate carbamoyltransferase catalytic subunit from Bacillus cytotoxicus (strain DSM 22905 / CIP 110041 / 391-98 / NVH 391-98).